The primary structure comprises 271 residues: 2,3,4,5-tetrahydropyridine-2,6-dicarboxylate N-succinyltransferase (271 aa).

Positions 102 and 139 each coordinate substrate.

The protein belongs to the transferase hexapeptide repeat family. Homotrimer.

The protein localises to the cytoplasm. It carries out the reaction (S)-2,3,4,5-tetrahydrodipicolinate + succinyl-CoA + H2O = (S)-2-succinylamino-6-oxoheptanedioate + CoA. Its pathway is amino-acid biosynthesis; L-lysine biosynthesis via DAP pathway; LL-2,6-diaminopimelate from (S)-tetrahydrodipicolinate (succinylase route): step 1/3. This Coxiella burnetii (strain Dugway 5J108-111) protein is 2,3,4,5-tetrahydropyridine-2,6-dicarboxylate N-succinyltransferase.